We begin with the raw amino-acid sequence, 752 residues long: Peptidyl-prolyl cis-trans isomerase G (752 aa).

The PPIase cyclophilin-type domain occupies 11–176 (FFDIAINNQP…AEVRILSCGE (166 aa)). The span at 182 to 193 (KVKKEEKKRHKS) shows a compositional bias: basic residues. The tract at residues 182-752 (KVKKEEKKRH…SPGTDEDKSG (571 aa)) is disordered. Low complexity predominate over residues 194-214 (SSSSSSSDSDSSSDSQSSSDS). Over residues 226-251 (RKRKKKHRKNSRKHKKEKKKRKKSKK) the composition is skewed to basic residues. Residues Ser-252, Ser-254, Ser-255, Ser-257, and Ser-288 each carry the phosphoserine modification. Basic and acidic residues predominate over residues 290-308 (PKADDKERKNREREREREC). Residue Ser-313 is modified to Phosphoserine. A compositionally biased stretch (basic residues) spans 327–345 (FGRKIKGRGPRRYRTPSRS). Basic and acidic residues-rich tracts occupy residues 346–366 (RSRD…EMQR) and 377–447 (RWIK…DKYN). Position 354 is a phosphoserine (Ser-354). The residue at position 356 (Thr-356) is a Phosphothreonine. Ser-384 carries the post-translational modification Phosphoserine. Lys-390 is covalently cross-linked (Glycyl lysine isopeptide (Lys-Gly) (interchain with G-Cter in SUMO2)). 3 positions are modified to phosphoserine: Ser-395, Ser-411, and Ser-413. The span at 448–461 (KNKVKKRGKSKSRS) shows a compositional bias: basic residues. Composition is skewed to basic and acidic residues over residues 462–552 (KSKE…DLTK) and 577–598 (RSHD…QEYR). Positions 599–625 (RRGRSRSRDRRTPGRSRSKDRRRRRRD) are enriched in basic residues. Basic and acidic residues predominate over residues 626–682 (SRSSEREESQSRNKEKYRSQDSKSSHRKENSEGEKRMYSKSRDHSSSNNNREKKADI). Residues Ser-685 and Ser-688 each carry the phosphoserine modification. The span at 685 to 705 (SPVSKTKQSSQDNEVKSSTLK) shows a compositional bias: polar residues. Lys-691 is covalently cross-linked (Glycyl lysine isopeptide (Lys-Gly) (interchain with G-Cter in SUMO2)). A phosphoserine mark is found at Ser-694, Ser-742, and Ser-743. Positions 706–752 (NQEDEKTRSPVEKENQKSKGQENDHVHDKNKKCDHESSPGTDEDKSG) are enriched in basic and acidic residues. The residue at position 746 (Thr-746) is a Phosphothreonine. Ser-751 carries the post-translational modification Phosphoserine.

Interacts with CLK1, PNN and with the phosphorylated C-terminal domain of RNA polymerase II.

Its subcellular location is the nucleus matrix. The protein resides in the nucleus speckle. It catalyses the reaction [protein]-peptidylproline (omega=180) = [protein]-peptidylproline (omega=0). With respect to regulation, inhibited by cyclosporin A (CsA). In terms of biological role, PPIase that catalyzes the cis-trans isomerization of proline imidic peptide bonds in oligopeptides and may therefore assist protein folding. May be implicated in the folding, transport, and assembly of proteins. May play an important role in the regulation of pre-mRNA splicing. This chain is Peptidyl-prolyl cis-trans isomerase G (Ppig), found in Rattus norvegicus (Rat).